The chain runs to 356 residues: Magnesium-protoporphyrin IX monomethyl ester [oxidative] cyclase (356 aa).

This sequence belongs to the AcsF family. Fe cation serves as cofactor.

The catalysed reaction is Mg-protoporphyrin IX 13-monomethyl ester + 3 NADPH + 3 O2 + 2 H(+) = 3,8-divinyl protochlorophyllide a + 3 NADP(+) + 5 H2O. The protein operates within porphyrin-containing compound metabolism; chlorophyll biosynthesis (light-independent). Its function is as follows. Catalyzes the formation of the isocyclic ring in chlorophyll biosynthesis. Mediates the cyclase reaction, which results in the formation of divinylprotochlorophyllide (Pchlide) characteristic of all chlorophylls from magnesium-protoporphyrin IX 13-monomethyl ester (MgPMME). The protein is Magnesium-protoporphyrin IX monomethyl ester [oxidative] cyclase of Synechococcus sp. (strain CC9605).